Here is a 497-residue protein sequence, read N- to C-terminus: NAD(P)H-quinone oxidoreductase chain 4, chloroplastic (497 aa).

A run of 13 helical transmembrane segments spans residues 4 to 24 (LPWL…IPLF), 35 to 55 (YTLG…CCHF), 87 to 107 (MGLI…AWPV), 113 to 133 (LFHF…ASQD), 134 to 154 (ILLF…LLSI), 167 to 187 (FILY…TIGL), 207 to 227 (IALE…KLPI), 242 to 262 (HYST…YGLI), 274 to 294 (AIFA…ASLI), 313 to 333 (MGFV…GAIL), 386 to 406 (LALP…GIVI), 416 to 436 (IVIT…LLSM), and 462 to 482 (IFIS…PNLV).

The protein belongs to the complex I subunit 4 family.

The protein resides in the plastid. It is found in the chloroplast thylakoid membrane. The enzyme catalyses a plastoquinone + NADH + (n+1) H(+)(in) = a plastoquinol + NAD(+) + n H(+)(out). It carries out the reaction a plastoquinone + NADPH + (n+1) H(+)(in) = a plastoquinol + NADP(+) + n H(+)(out). The polypeptide is NAD(P)H-quinone oxidoreductase chain 4, chloroplastic (Angiopteris evecta (Mule's foot fern)).